We begin with the raw amino-acid sequence, 354 residues long: Chorismate synthase (354 aa).

NADP(+)-binding residues include Arg-48 and Arg-54. Residues 125 to 127 (RSS), 238 to 239 (NA), Gly-278, 293 to 297 (KPTSS), and Arg-319 each bind FMN.

Belongs to the chorismate synthase family. In terms of assembly, homotetramer. It depends on FMNH2 as a cofactor.

The catalysed reaction is 5-O-(1-carboxyvinyl)-3-phosphoshikimate = chorismate + phosphate. It participates in metabolic intermediate biosynthesis; chorismate biosynthesis; chorismate from D-erythrose 4-phosphate and phosphoenolpyruvate: step 7/7. Catalyzes the anti-1,4-elimination of the C-3 phosphate and the C-6 proR hydrogen from 5-enolpyruvylshikimate-3-phosphate (EPSP) to yield chorismate, which is the branch point compound that serves as the starting substrate for the three terminal pathways of aromatic amino acid biosynthesis. This reaction introduces a second double bond into the aromatic ring system. This chain is Chorismate synthase, found in Blochmanniella pennsylvanica (strain BPEN).